Reading from the N-terminus, the 219-residue chain is PKHD-type hydroxylase SYNPCC7002_A2658 (219 aa).

Residues Thr78 to Ser172 enclose the Fe2OG dioxygenase domain. His96, Asp98, and His153 together coordinate Fe cation. Arg163 contributes to the 2-oxoglutarate binding site.

Fe(2+) serves as cofactor. It depends on L-ascorbate as a cofactor.

This Picosynechococcus sp. (strain ATCC 27264 / PCC 7002 / PR-6) (Agmenellum quadruplicatum) protein is PKHD-type hydroxylase SYNPCC7002_A2658.